Reading from the N-terminus, the 274-residue chain is Large ribosomal subunit protein uL2 (274 aa).

Positions 224–259 are disordered; sequence AMNPVDHPHGGGEGRTSGGRHPVTPWGIPTKGYKTR.

The protein belongs to the universal ribosomal protein uL2 family. In terms of assembly, part of the 50S ribosomal subunit. Forms a bridge to the 30S subunit in the 70S ribosome.

One of the primary rRNA binding proteins. Required for association of the 30S and 50S subunits to form the 70S ribosome, for tRNA binding and peptide bond formation. It has been suggested to have peptidyltransferase activity; this is somewhat controversial. Makes several contacts with the 16S rRNA in the 70S ribosome. The protein is Large ribosomal subunit protein uL2 of Geobacter sp. (strain M21).